The sequence spans 496 residues: Cobyric acid synthase (496 aa).

In terms of domain architecture, GATase cobBQ-type spans 264–458 (HTRIAVVAYP…LHGLFEDAAV (195 aa)). The Nucleophile role is filled by Cys-345. Residue His-450 is part of the active site.

The protein belongs to the CobB/CobQ family. CobQ subfamily.

It functions in the pathway cofactor biosynthesis; adenosylcobalamin biosynthesis. Functionally, catalyzes amidations at positions B, D, E, and G on adenosylcobyrinic A,C-diamide. NH(2) groups are provided by glutamine, and one molecule of ATP is hydrogenolyzed for each amidation. This chain is Cobyric acid synthase, found in Acidovorax ebreus (strain TPSY) (Diaphorobacter sp. (strain TPSY)).